The sequence spans 1296 residues: MADPDAIYELAQRIESNIEVDKRVAALHSLQSLLESAGHVVEADAVTSAVKVALRHANQALSTASLSFIPTYASMIYSGDATDSHSLLNHNVRMLVNSVGLLVIDKLGDQKERIREAARTALIELGNAAYAISSGHLTTSGKGKETETPLGIFERTLREAGLAAKFARVREQSVLLLPILRQSCEKYPIRPLLSTTVELLLDADATVREGARSTLITLFSSATPAAKADLKKELEKRAVRKQTADAILREVLGAPSAATSAPVLSPPAPTTFAPTTRSQFNSSHGADASIPTSYMKSAPAAGTTFPSMPSASATAAADGIRPVYIASRSDLERTFTTMMPFFENKESEHNWLNREQSMIKIRGLLVSGAHRQFGETLFVAQLKAVQEGILKCISSLRTTLSMHAIHLVQELAMELGDDLAPCVEAFLIHLVGMAGFTKKLIANATQEAAAAIMVNVSFRPLYLQLIWQAFQEKNVATRTAAAEHLCTVLNTHAAHRKHAVESHGGLDLLEKCMRKGVGDSNPAARTKSREAFWIFHRHWAAQANALLNSLDPAIRKQVAALAPSDVETDTIVEQQPKADGGPVRVRPGGASMALIQAKKAAALKAAQERDRKKAEDAAAAHEARVAAARAALAEQQQQQQQVQKHLEQQASVEDFVTPVAANNKKGTGFMPIKNRSLHHPGGQGAGAANLKPATELTVVISPTAHQRIQTAISVPLPTSPTPAVTPNARIKSKNLSQTSWETPPHPRSPGLSPVSARSRAISSSSYSSQGSSSSARMQGAASTPRSNRAPPVTHSTLKADLENLSIDGIDGIDDGEVTADATQQARFATSSRDNGTGEDDTLQMNAPEDASMDLMGMDFNSPFKMPASGGRAVKTQSVLLERQNALDALQQTPQPKSHRTISTSSTSSTNSSTTPASASVRRSGLPRPVSTMHSPSPSASASHISAGHIHAPTTSHRVLSSTPSRRAPTNGVSTALENRAKRLDAQASTASASPAKAKPEVWTWIQALMDGTADLRTFRRLARLSSEFGISATKAADERTEQDDEMVLERGPFSNVAWATKSDGAFSSGLQAWLEGGLFGKLFDGLKRYLCVGDGGGSGELQMSAQVVLLRLVENQFSLFGATDREGELLDVVLQSITLLCGTRTSCVASSSIVAGRAALQGFESILGAWSGRCDPVLGFDALLSRSLSDASTVAVLRSGFTPLLVRLPAQLVLEDFLPRLAPLLTSTLHHASPEKRLTAVTVLRHLNDMVRIDAQDSHTRIFDALGLTIRDDDDQAELKSKRALLDVLMYYFSKN.

4 disordered regions span residues 258–287 (ATSA…HGAD), 735–793 (LSQT…PPVT), 888–946 (ALQQ…HISA), and 953–972 (TTSH…TNGV). Residues 277–287 (RSQFNSSHGAD) show a composition bias toward polar residues. 3 stretches are compositionally biased toward low complexity: residues 755–782 (SARS…GAAS), 900–919 (TIST…ASAS), and 933–946 (HSPS…HISA). Residues 953 to 964 (TTSHRVLSSTPS) are compositionally biased toward polar residues.

The protein belongs to the CLASP family. As to quaternary structure, interacts with microtubules.

The protein resides in the cytoplasm. Its subcellular location is the cytoskeleton. It localises to the nucleus. It is found in the spindle. Its function is as follows. Microtubule binding protein that promotes the stabilization of dynamic microtubules. Required for mitotic spindle formation. In Mycosarcoma maydis (Corn smut fungus), this protein is Protein STU1 (STU1).